Here is an 80-residue protein sequence, read N- to C-terminus: Large ribosomal subunit protein bL31 (80 aa).

The protein belongs to the bacterial ribosomal protein bL31 family. Type A subfamily. As to quaternary structure, part of the 50S ribosomal subunit.

Binds the 23S rRNA. The polypeptide is Large ribosomal subunit protein bL31 (Nostoc punctiforme (strain ATCC 29133 / PCC 73102)).